We begin with the raw amino-acid sequence, 428 residues long: Neuromedin-U receptor 1 (428 aa).

The Extracellular portion of the chain corresponds to 1 to 59 (MTPPCLNCSIFPGALSPNASRSPLVCNISEFKWPYQPEDLNLTDEALRLKYLGPQQMKQ). Asparagine 27 and asparagine 41 each carry an N-linked (GlcNAc...) asparagine glycan. The chain crosses the membrane as a helical span at residues 60 to 80 (FVPICVTYLLIFVVGTLGNGL). Topologically, residues 81-96 (TCTVILRNKTMRTPTN) are cytoplasmic. Residues 97–117 (FYLFSLAVSDMLVLLVGLPLE) traverse the membrane as a helical segment. The Extracellular segment spans residues 118–137 (LYEMQQNYPFQLGASACYFR). Cysteine 134 and cysteine 219 are joined by a disulfide. The chain crosses the membrane as a helical span at residues 138–158 (ILLLETVCLASVLNVTALSVE). The Cytoplasmic portion of the chain corresponds to 159–181 (RYVAVVRPLQAKSVMTRAHVRRM). Residues 182–202 (VGAIWVLATLFSLPNTSLHGL) traverse the membrane as a helical segment. Residues 203-235 (SQLTVPCRGPVPDSAICSLVGPMDFYKLVVLTT) are Extracellular-facing. A helical membrane pass occupies residues 236–256 (ALLFFCLPMVTISVLYLLIGL). At 257 to 294 (RLRRERMLLQVEVKGRKTAATQETSHRRIQLQDRGRRQ) the chain is on the cytoplasmic side. The chain crosses the membrane as a helical span at residues 295–315 (VTKMLFALVVVFGICWAPFHA). At 316–339 (DRIMWSLVYGHSTEGLHLAYQCVH) the chain is on the extracellular side. The chain crosses the membrane as a helical span at residues 340–360 (IASGIFFYLGSAANPVLYSLM). Residues 361-428 (STRFRETFLQ…PGCQQETDPS (68 aa)) are Cytoplasmic-facing.

This sequence belongs to the G-protein coupled receptor 1 family. In terms of tissue distribution, ubiquitously expressed.

It is found in the cell membrane. In terms of biological role, receptor for the neuromedin-U and neuromedin-S neuropeptides. The protein is Neuromedin-U receptor 1 (Nmur1) of Mus musculus (Mouse).